The following is a 1579-amino-acid chain: Pentafunctional AROM polypeptide (1579 aa).

The segment at Met-1 to Asp-391 is 3-dehydroquinate synthase. NAD(+) is bound by residues Asp-44–Asn-46, Glu-79–Lys-82, Gly-110–Val-112, and Asp-115. A 7-phospho-2-dehydro-3-deoxy-D-arabino-heptonate-binding site is contributed by Arg-126. Thr-135–Ser-136 serves as a coordination point for NAD(+). The 7-phospho-2-dehydro-3-deoxy-D-arabino-heptonate site is built by Asp-142 and Lys-148. Lys-157 is a binding site for NAD(+). Asn-158 provides a ligand contact to 7-phospho-2-dehydro-3-deoxy-D-arabino-heptonate. Residues Trp-175–Thr-178 and Asn-186 contribute to the NAD(+) site. Residue Glu-190 participates in Zn(2+) binding. 7-phospho-2-dehydro-3-deoxy-D-arabino-heptonate contacts are provided by residues Glu-190–Lys-193 and Lys-257. Catalysis depends on Glu-267, which acts as the Proton acceptor; for 3-dehydroquinate synthase activity. 7-phospho-2-dehydro-3-deoxy-D-arabino-heptonate is bound by residues Arg-271–Asn-275 and His-278. His-278 serves as a coordination point for Zn(2+). His-282 functions as the Proton acceptor; for 3-dehydroquinate synthase activity in the catalytic mechanism. The 7-phospho-2-dehydro-3-deoxy-D-arabino-heptonate site is built by His-294 and Lys-363. Residue His-294 coordinates Zn(2+). The EPSP synthase stretch occupies residues Val-404–Ala-862. Cys-844 acts as the For EPSP synthase activity in catalysis. The segment at Ser-881–Cys-1070 is shikimate kinase. Residue Gly-886–Thr-893 participates in ATP binding. A 3-dehydroquinase region spans residues Leu-1071–Gln-1283. His-1188 functions as the Proton acceptor; for 3-dehydroquinate dehydratase activity in the catalytic mechanism. Lys-1217 functions as the Schiff-base intermediate with substrate; for 3-dehydroquinate dehydratase activity in the catalytic mechanism. Positions Ala-1296–Ala-1579 are shikimate dehydrogenase.

This sequence in the N-terminal section; belongs to the sugar phosphate cyclases superfamily. Dehydroquinate synthase family. The protein in the 2nd section; belongs to the EPSP synthase family. It in the 3rd section; belongs to the shikimate kinase family. In the 4th section; belongs to the type-I 3-dehydroquinase family. This sequence in the C-terminal section; belongs to the shikimate dehydrogenase family. As to quaternary structure, homodimer. Zn(2+) is required as a cofactor.

Its subcellular location is the cytoplasm. The enzyme catalyses 7-phospho-2-dehydro-3-deoxy-D-arabino-heptonate = 3-dehydroquinate + phosphate. It carries out the reaction 3-dehydroquinate = 3-dehydroshikimate + H2O. It catalyses the reaction shikimate + NADP(+) = 3-dehydroshikimate + NADPH + H(+). The catalysed reaction is shikimate + ATP = 3-phosphoshikimate + ADP + H(+). The enzyme catalyses 3-phosphoshikimate + phosphoenolpyruvate = 5-O-(1-carboxyvinyl)-3-phosphoshikimate + phosphate. Its pathway is metabolic intermediate biosynthesis; chorismate biosynthesis; chorismate from D-erythrose 4-phosphate and phosphoenolpyruvate: step 2/7. It participates in metabolic intermediate biosynthesis; chorismate biosynthesis; chorismate from D-erythrose 4-phosphate and phosphoenolpyruvate: step 3/7. The protein operates within metabolic intermediate biosynthesis; chorismate biosynthesis; chorismate from D-erythrose 4-phosphate and phosphoenolpyruvate: step 4/7. It functions in the pathway metabolic intermediate biosynthesis; chorismate biosynthesis; chorismate from D-erythrose 4-phosphate and phosphoenolpyruvate: step 5/7. Its pathway is metabolic intermediate biosynthesis; chorismate biosynthesis; chorismate from D-erythrose 4-phosphate and phosphoenolpyruvate: step 6/7. Its function is as follows. The AROM polypeptide catalyzes 5 consecutive enzymatic reactions in prechorismate polyaromatic amino acid biosynthesis. The polypeptide is Pentafunctional AROM polypeptide (Lachancea thermotolerans (strain ATCC 56472 / CBS 6340 / NRRL Y-8284) (Yeast)).